A 322-amino-acid chain; its full sequence is MLDKIWYRSKPNLLSRVLQPISLVFIDIANKRKIKQQLKQYKSKIPIIVVGNISVGGTGKTPVVRMLVQQYLAQDKKPAIISRGYGAKADNYPFEVTSGTLATQCGDEPAMLFDALQAQVPIVIAPERVQAVKYIEKNFPDTDIIMSDDGLQHYKLARDKEIVVVDAIRMFGNKLCLPAGPLREPIERLKEVDQIIVIGNCSDKDKELLKNYKNVTYAKVVATEFVNILTAKKVAKTEFNHQNAIAIAGIGNPTKFFKTLEESAINITAKKVFKDHHKFTQSDFEGIDSDITVVMTYKDAIKCKNFAKANWWYLDIALDINV.

54-61 serves as a coordination point for ATP; sequence SVGGTGKT.

It belongs to the LpxK family.

It carries out the reaction a lipid A disaccharide + ATP = a lipid IVA + ADP + H(+). The protein operates within glycolipid biosynthesis; lipid IV(A) biosynthesis; lipid IV(A) from (3R)-3-hydroxytetradecanoyl-[acyl-carrier-protein] and UDP-N-acetyl-alpha-D-glucosamine: step 6/6. Functionally, transfers the gamma-phosphate of ATP to the 4'-position of a tetraacyldisaccharide 1-phosphate intermediate (termed DS-1-P) to form tetraacyldisaccharide 1,4'-bis-phosphate (lipid IVA). In Francisella tularensis subsp. holarctica (strain FTNF002-00 / FTA), this protein is Tetraacyldisaccharide 4'-kinase.